A 373-amino-acid polypeptide reads, in one-letter code: MVEEICHICNDKSTGKHYGAISCDGCKGFFRRSIRKRYHYQCRFEQNCDVTKNKRNACRACRLQKCVKAGMKSNAIQNERDAIGKRKKTTGAEKEDLIDQLVAAETLCQQLRSSVIKNTSSLAPYDCGKVKWNYEDARAATLDDIGKSIHQQLVLFIEWAKSLPQFSFLAQADQAALLKGGAASIIVLGVAYRSICLTVENTICLANDTLLPKEHATQVGDINCVVGRIIDEIVNPMRRLNMDLIEYVALKAILFFNPVVREINDQSPVENARYAFLRSLQRRCTDKALENMEDESMDCRSGKLLLLLPSLQAIAQQLVEDVQLARLFGLVNVDSLMEELILNDMKPSDPQILQTSLASPVNSSVKAEVELEE.

A DNA-binding region (nuclear receptor) is located at residues glutamate 3–asparagine 78. 2 NR C4-type zinc fingers span residues cysteine 6 to cysteine 26 and cysteine 42 to cysteine 66. An NR LBD domain is found at glutamate 93–aspartate 344.

It belongs to the nuclear hormone receptor family. In terms of assembly, interacts with R-SMAD daf-8. In terms of tissue distribution, expressed in the ASI neurons, hypodermis, and in tail neurons.

Its subcellular location is the nucleus. In terms of biological role, orphan nuclear receptor which, in cooperation with R-SMAD daf-8, modulates the Insulin/IGF-1-like signaling (IIS) pathway, perhaps by regulating expression of the potassium channel exp-2, which in turn modulates the secretion of insulin-like peptide daf-28. The protein is Nuclear hormone receptor family member nhr-69 (nhr-69) of Caenorhabditis elegans.